Consider the following 127-residue polypeptide: Ribosome-binding factor A (127 aa).

This sequence belongs to the RbfA family. As to quaternary structure, monomer. Binds 30S ribosomal subunits, but not 50S ribosomal subunits or 70S ribosomes.

The protein localises to the cytoplasm. Functionally, one of several proteins that assist in the late maturation steps of the functional core of the 30S ribosomal subunit. Associates with free 30S ribosomal subunits (but not with 30S subunits that are part of 70S ribosomes or polysomes). Required for efficient processing of 16S rRNA. May interact with the 5'-terminal helix region of 16S rRNA. The protein is Ribosome-binding factor A of Glaesserella parasuis serovar 5 (strain SH0165) (Haemophilus parasuis).